The chain runs to 252 residues: 3-deoxy-manno-octulosonate cytidylyltransferase (252 aa).

This sequence belongs to the KdsB family.

The protein localises to the cytoplasm. It catalyses the reaction 3-deoxy-alpha-D-manno-oct-2-ulosonate + CTP = CMP-3-deoxy-beta-D-manno-octulosonate + diphosphate. It participates in nucleotide-sugar biosynthesis; CMP-3-deoxy-D-manno-octulosonate biosynthesis; CMP-3-deoxy-D-manno-octulosonate from 3-deoxy-D-manno-octulosonate and CTP: step 1/1. It functions in the pathway bacterial outer membrane biogenesis; lipopolysaccharide biosynthesis. Activates KDO (a required 8-carbon sugar) for incorporation into bacterial lipopolysaccharide in Gram-negative bacteria. The sequence is that of 3-deoxy-manno-octulosonate cytidylyltransferase from Phocaeicola vulgatus (strain ATCC 8482 / DSM 1447 / JCM 5826 / CCUG 4940 / NBRC 14291 / NCTC 11154) (Bacteroides vulgatus).